The following is a 233-amino-acid chain: MIEELQDYLAKEFNIHFDNPALLAEAFTQASYVNEHPNQGLKYYERIEFLGDAVLELIVSEYIYKRFPELPQGKLTRLRAAMVCEDSFSKFAKECHFDQYIRLGHGEEMAGARERPGLLCDIFESFIGALYLDQGRPAVEKFVQRVIFPKLDMGWFDHAVDAKTSLQEFLQRDGDIAIEYHLVEESGTENDPEFKVNVTANGDVIGEGKGSSKKHAEMQAAQQALDNMRNKNK.

In terms of domain architecture, RNase III spans 6 to 135 (QDYLAKEFNI…FIGALYLDQG (130 aa)). Glu-48 is a Mg(2+) binding site. Asp-52 is an active-site residue. 2 residues coordinate Mg(2+): Asp-121 and Glu-124. The active site involves Glu-124. The 70-residue stretch at 161-230 (DAKTSLQEFL…AQQALDNMRN (70 aa)) folds into the DRBM domain. The disordered stretch occupies residues 205-233 (IGEGKGSSKKHAEMQAAQQALDNMRNKNK).

This sequence belongs to the ribonuclease III family. As to quaternary structure, homodimer. It depends on Mg(2+) as a cofactor.

The protein localises to the cytoplasm. It carries out the reaction Endonucleolytic cleavage to 5'-phosphomonoester.. Digests double-stranded RNA. Involved in the processing of primary rRNA transcript to yield the immediate precursors to the large and small rRNAs (23S and 16S). Processes some mRNAs, and tRNAs when they are encoded in the rRNA operon. Processes pre-crRNA and tracrRNA of type II CRISPR loci if present in the organism. The protein is Ribonuclease 3 of Limosilactobacillus reuteri (strain DSM 20016) (Lactobacillus reuteri).